Here is a 734-residue protein sequence, read N- to C-terminus: Photosystem I P700 chlorophyll a apoprotein A2 (734 aa).

A run of 8 helical transmembrane segments spans residues 46–69 (IFAS…FHVA), 135–158 (LYIG…LHLQ), 175–199 (LNHH…HVAI), 273–291 (IAHH…GHMY), 330–353 (LHFQ…QHMY), 369–395 (AALY…IFFI), 417–439 (AIIS…LYVH), and 517–535 (FLVH…LILV). 2 residues coordinate [4Fe-4S] cluster: cysteine 559 and cysteine 568. 2 consecutive transmembrane segments (helical) span residues 575-596 (AFYL…YWHW) and 643-665 (LSVW…MFLI). Chlorophyll a contacts are provided by histidine 654, methionine 662, and tyrosine 670. Tryptophan 671 contributes to the phylloquinone binding site. Residues 707-727 (VVGLAHFSVGYVFTYAAFLIA) form a helical membrane-spanning segment.

This sequence belongs to the PsaA/PsaB family. The PsaA/B heterodimer binds the P700 chlorophyll special pair and subsequent electron acceptors. PSI consists of a core antenna complex that captures photons, and an electron transfer chain that converts photonic excitation into a charge separation. The eukaryotic PSI reaction center is composed of at least 11 subunits. It depends on P700 is a chlorophyll a/chlorophyll a' dimer, A0 is one or more chlorophyll a, A1 is one or both phylloquinones and FX is a shared 4Fe-4S iron-sulfur center. as a cofactor.

Its subcellular location is the plastid. The protein localises to the chloroplast thylakoid membrane. The enzyme catalyses reduced [plastocyanin] + hnu + oxidized [2Fe-2S]-[ferredoxin] = oxidized [plastocyanin] + reduced [2Fe-2S]-[ferredoxin]. PsaA and PsaB bind P700, the primary electron donor of photosystem I (PSI), as well as the electron acceptors A0, A1 and FX. PSI is a plastocyanin-ferredoxin oxidoreductase, converting photonic excitation into a charge separation, which transfers an electron from the donor P700 chlorophyll pair to the spectroscopically characterized acceptors A0, A1, FX, FA and FB in turn. Oxidized P700 is reduced on the lumenal side of the thylakoid membrane by plastocyanin. The protein is Photosystem I P700 chlorophyll a apoprotein A2 of Mesostigma viride (Green alga).